We begin with the raw amino-acid sequence, 76 residues long: Large ribosomal subunit protein bL28 (76 aa).

This sequence belongs to the bacterial ribosomal protein bL28 family.

The protein is Large ribosomal subunit protein bL28 of Opitutus terrae (strain DSM 11246 / JCM 15787 / PB90-1).